The primary structure comprises 98 residues: NADH-ubiquinone oxidoreductase chain 4L (98 aa).

Helical transmembrane passes span M1–M21, L26–I46, and M59–V79.

This sequence belongs to the complex I subunit 4L family. As to quaternary structure, core subunit of respiratory chain NADH dehydrogenase (Complex I) which is composed of 45 different subunits.

It localises to the mitochondrion inner membrane. It carries out the reaction a ubiquinone + NADH + 5 H(+)(in) = a ubiquinol + NAD(+) + 4 H(+)(out). Functionally, core subunit of the mitochondrial membrane respiratory chain NADH dehydrogenase (Complex I) which catalyzes electron transfer from NADH through the respiratory chain, using ubiquinone as an electron acceptor. Part of the enzyme membrane arm which is embedded in the lipid bilayer and involved in proton translocation. The sequence is that of NADH-ubiquinone oxidoreductase chain 4L (MT-ND4L) from Pontoporia blainvillei (Franciscana).